The chain runs to 143 residues: Transcriptional regulator MraZ (143 aa).

SpoVT-AbrB domains follow at residues 5–47 and 76–119; these read EYEH…TLEE and AVEV…DRET.

Belongs to the MraZ family. In terms of assembly, forms oligomers.

Its subcellular location is the cytoplasm. The protein localises to the nucleoid. The sequence is that of Transcriptional regulator MraZ from Staphylococcus saprophyticus subsp. saprophyticus (strain ATCC 15305 / DSM 20229 / NCIMB 8711 / NCTC 7292 / S-41).